The sequence spans 58 residues: Metallothionein-1 (58 aa).

Residues 1-28 (PGPCCKDKCECAEGGCKTGCKCTSCRCA) are beta. 18 residues coordinate a divalent metal cation: Cys-4, Cys-5, Cys-9, Cys-11, Cys-16, Cys-20, Cys-22, Cys-25, Cys-27, Cys-30, Cys-33, Cys-37, Cys-39, Cys-45, Cys-49, Cys-53, Cys-55, and Cys-56. The segment at 29–58 (PCEKCTSGCKCPSKDECAKTCSKPCSCCXX) is alpha.

It belongs to the metallothionein superfamily. Type 3 family.

Its function is as follows. Metallothioneins have a high content of cysteine residues that bind various heavy metals. The different forms of lobster metallothioneins may have different biological functions. Class I MTS in marine crustacea are involved in the sequestration of elevated levels of heavy-metal ions. Binds 6 metal ions. Known to bind cadmium. This chain is Metallothionein-1, found in Homarus americanus (American lobster).